We begin with the raw amino-acid sequence, 369 residues long: Ribonuclease 3 (369 aa).

The region spanning I6–D142 is the RNase III domain. E46 lines the Mg(2+) pocket. The active site involves D50. 2 residues coordinate Mg(2+): D128 and E131. Residue E131 is part of the active site. The DRBM domain maps to N272 to K341.

It belongs to the ribonuclease III family. Homodimer. Requires Mg(2+) as cofactor.

Its subcellular location is the cytoplasm. It catalyses the reaction Endonucleolytic cleavage to 5'-phosphomonoester.. In terms of biological role, digests double-stranded RNA. Involved in the processing of primary rRNA transcript to yield the immediate precursors to the large and small rRNAs (23S and 16S). Processes some mRNAs, and tRNAs when they are encoded in the rRNA operon. Processes pre-crRNA and tracrRNA of type II CRISPR loci if present in the organism. The protein is Ribonuclease 3 (rnc) of Treponema succinifaciens (strain ATCC 33096 / DSM 2489 / 6091).